A 409-amino-acid chain; its full sequence is Galactosylgalactosylxylosylprotein 3-beta-glucuronosyltransferase S (409 aa).

Positions 1-45 (MSSARLLESQTSDEDNEDIERRPHQSHSRSCSNNTTPTHPPHPMV) are disordered. Over 1-53 (MSSARLLESQTSDEDNEDIERRPHQSHSRSCSNNTTPTHPPHPMVRKGGVARR) the chain is Cytoplasmic. Ser9 carries the phosphoserine modification. The residue at position 11 (Thr11) is a Phosphothreonine. A phosphoserine mark is found at Ser12 and Ser32. The chain crosses the membrane as a helical; Signal-anchor for type II membrane protein span at residues 54–73 (ICLIGGALFLLLVALCYLTL). Topologically, residues 74 to 409 (SGDTRLGGSE…RENPHSKILS (336 aa)) are lumenal. Residues Asn102 and Asn223 are each glycosylated (N-linked (GlcNAc...) asparagine). Asp235 contacts Mn(2+). The active-site Proton acceptor is Glu318. Residue Asn338 is glycosylated (N-linked (GlcNAc...) asparagine). The interval 389–409 (EGRNALISKNGRENPHSKILS) is disordered. Basic and acidic residues predominate over residues 398 to 409 (NGRENPHSKILS).

This sequence belongs to the glycosyltransferase 43 family. The cofactor is Mn(2+).

It localises to the golgi apparatus membrane. It carries out the reaction 3-O-(beta-D-galactosyl-(1-&gt;3)-beta-D-galactosyl-(1-&gt;4)-beta-D-xylosyl)-L-seryl-[protein] + UDP-alpha-D-glucuronate = 3-O-(beta-D-GlcA-(1-&gt;3)-beta-D-Gal-(1-&gt;3)-beta-D-Gal-(1-&gt;4)-beta-D-Xyl)-L-seryl-[protein] + UDP + H(+). Its pathway is protein modification; protein glycosylation. Involved in the biosynthesis of L2/HNK-1 carbohydrate epitope on both glycolipids and glycoproteins. Enzyme has a broad specificity. The chain is Galactosylgalactosylxylosylprotein 3-beta-glucuronosyltransferase S (GlcAT-S) from Drosophila melanogaster (Fruit fly).